Reading from the N-terminus, the 687-residue chain is Bifunctional lysine-specific demethylase and histidyl-hydroxylase NO66 (687 aa).

The disordered stretch occupies residues 1 to 174; the sequence is MSDKNKKVSA…RSCPLPSKKN (174 aa). Basic and acidic residues predominate over residues 23–32; sequence DVQKGTKNSD. 2 stretches are compositionally biased toward low complexity: residues 33-50 and 58-74; these read KNGA…SKNG and KKNG…SSSS. Residues 75–96 show a composition bias toward acidic residues; that stretch reads GEDEEDDSTDSSDEYESSESGE. Polar residues-rich tracts occupy residues 100 to 116 and 136 to 156; these read LNSH…ANTR and RTSS…QQPK. Residues 347–483 enclose the JmjC domain; the sequence is NPSSYLVQLR…NLMEKLMPLV (137 aa). The Fe cation site is built by histidine 387, aspartate 389, and histidine 449.

Belongs to the ROX family. NO66 subfamily. Fe(2+) serves as cofactor.

It is found in the nucleus. It carries out the reaction N(6),N(6)-dimethyl-L-lysyl(36)-[histone H3] + 2 2-oxoglutarate + 2 O2 = L-lysyl(36)-[histone H3] + 2 formaldehyde + 2 succinate + 2 CO2. Functionally, oxygenase that can act as both a histone lysine demethylase and a ribosomal histidine hydroxylase. Specifically demethylates 'Lys-4' (H3K4me) and 'Lys-36' (H3K36me) of histone H3, thereby playing a central role in histone code. The chain is Bifunctional lysine-specific demethylase and histidyl-hydroxylase NO66 from Drosophila persimilis (Fruit fly).